A 161-amino-acid polypeptide reads, in one-letter code: Endoribonuclease YbeY (161 aa).

His-121, His-125, and His-131 together coordinate Zn(2+).

It belongs to the endoribonuclease YbeY family. Zn(2+) serves as cofactor.

The protein resides in the cytoplasm. Its function is as follows. Single strand-specific metallo-endoribonuclease involved in late-stage 70S ribosome quality control and in maturation of the 3' terminus of the 16S rRNA. The polypeptide is Endoribonuclease YbeY (Xanthomonas oryzae pv. oryzae (strain MAFF 311018)).